We begin with the raw amino-acid sequence, 482 residues long: tRNA(Ile)-lysidine synthase (482 aa).

ATP is bound at residue 28 to 33; it reads SGGPDS.

The protein belongs to the tRNA(Ile)-lysidine synthase family.

It localises to the cytoplasm. The catalysed reaction is cytidine(34) in tRNA(Ile2) + L-lysine + ATP = lysidine(34) in tRNA(Ile2) + AMP + diphosphate + H(+). Functionally, ligates lysine onto the cytidine present at position 34 of the AUA codon-specific tRNA(Ile) that contains the anticodon CAU, in an ATP-dependent manner. Cytidine is converted to lysidine, thus changing the amino acid specificity of the tRNA from methionine to isoleucine. This chain is tRNA(Ile)-lysidine synthase, found in Symbiobacterium thermophilum (strain DSM 24528 / JCM 14929 / IAM 14863 / T).